We begin with the raw amino-acid sequence, 1493 residues long: Protein Shroom4 (1493 aa).

Positions 10 to 92 (YVPVQLQGGA…ILKLIVRRRN (83 aa)) constitute a PDZ domain. Residues 202–282 (CALSLRPEEP…PPQPPVRRDS (81 aa)) form a disordered region. Composition is skewed to polar residues over residues 234–243 (AETSGGSRRT) and 249–262 (TPSS…QEGY). The residue at position 411 (S411) is a Phosphoserine. Residues 430–695 (GSKGMELPPV…SPGQRPGQSS (266 aa)) form a disordered region. Composition is skewed to basic and acidic residues over residues 470 to 484 (QSSK…DDRS) and 498 to 509 (GEADGHPSEKGF). The segment covering 513-547 (NRTSRAASELANQQPSASGSLVQQATDCSSTTKAA) has biased composition (polar residues). S729 carries the phosphoserine modification. 2 disordered regions span residues 740-759 (AAME…ASTA) and 781-813 (SKSL…NFQP). The span at 782-802 (KSLSTSHLPGLTTHSNKTFTQ) shows a compositional bias: polar residues. S1019 carries the post-translational modification Phosphoserine. 4 disordered regions span residues 1117-1170 (AAQQ…ETSG), 1187-1206 (SFGH…AEQE), 1214-1236 (DFLP…PCYY), and 1246-1265 (GQEA…PPSG). Low complexity predominate over residues 1118 to 1129 (AQQQKQQQQQQK). Over residues 1132 to 1159 (EEEEEEEEEEEEEEEEEEEEAEEEEEEL) the composition is skewed to acidic residues. In terms of domain architecture, ASD2 spans 1213–1492 (SDFLPPIRGH…RESLLLGPSN (280 aa)). The stretch at 1382–1488 (LSGRLARVEN…LKCLRESLLL (107 aa)) forms a coiled coil.

It belongs to the shroom family. In terms of assembly, interacts directly with F-actin. As to expression, expressed in all fetal and adult tissues investigated. Expressed in adult heart, brain, placenta, lung, liver, skeletal muscle, kidney and pancreas. In brain regions detected in cerebellum, cerebral cortex, medulla, spinal cord, occipital pole, frontal lobe, temporal lobe and putamen. The expression is strongest in the medulla and weakest in the cerebral cortex.

Its subcellular location is the cytoplasm. It localises to the cytoskeleton. Probable regulator of cytoskeletal architecture that plays an important role in development. May regulate cellular and cytoskeletal architecture by modulating the spatial distribution of myosin II. This is Protein Shroom4 (SHROOM4) from Homo sapiens (Human).